A 171-amino-acid chain; its full sequence is Spiderine-2a (171 aa).

The N-terminal stretch at 1-18 is a signal peptide; the sequence is MKFALVLLGVCAFYLVNA. A propeptide spans 19–58 (removed in mature form); the sequence is TGDLETELEASELQELQEALDLIAETPLESLEAEELEEAR. The interval 59–104 is linear cationic cytotoxin domain; sequence KFKLPKINWGKLASKAKDVYKKGQKLAKNKNVKKALKYGKQLAENL. The Oxytoxin-type inhibitor cystine knot (ICK) domain maps to 118–171; sequence NNKCWAIGTRCTDDCDCCPEHHCHCPAKSWTFGLIPCSCQVTESDKVNKCPPAE. 5 cysteine pairs are disulfide-bonded: cysteine 121–cysteine 135, cysteine 128–cysteine 140, cysteine 132–cysteine 167, cysteine 134–cysteine 156, and cysteine 142–cysteine 154.

Disulfide bonds. As to expression, expressed by the venom gland.

It localises to the secreted. In terms of biological role, has antimicrobial, insecticidal, cytolytic and cytotoxic activity. This is Spiderine-2a from Oxyopes takobius (Lynx spider).